The primary structure comprises 224 residues: MHKTHSTMSGKSMKVIGVLALQGAFLEHTNHLKRCLAENDYGIKIEIKTVKTPEDLAQCDALIIPGGESTSMSLIAQRTGLYPCLYEFVHNPEKVVWGTCAGLIFLSAQLENESALVKTLGVLKVDVRRNAFGRQAQSFTQKCDFSNFIPGCDNFPATFIRAPVIERILDPIAVKSLYELPVNGKDVVVAATQNHNILVTSFHPELADSDTRFHDWFIRQFVSN.

Gly67 to Ser69 lines the L-glutamine pocket. Cys100 serves as the catalytic Nucleophile. Residues Arg129 and Ile160–Arg161 contribute to the L-glutamine site. Active-site charge relay system residues include His203 and Glu205.

Belongs to the glutaminase PdxT/SNO family.

It carries out the reaction aldehydo-D-ribose 5-phosphate + D-glyceraldehyde 3-phosphate + L-glutamine = pyridoxal 5'-phosphate + L-glutamate + phosphate + 3 H2O + H(+). It catalyses the reaction L-glutamine + H2O = L-glutamate + NH4(+). Its pathway is cofactor biosynthesis; pyridoxal 5'-phosphate biosynthesis. Functionally, catalyzes the hydrolysis of glutamine to glutamate and ammonia as part of the biosynthesis of pyridoxal 5'-phosphate. The resulting ammonia molecule is channeled to the active site of a SNZ isoform. The polypeptide is Pyridoxal 5'-phosphate synthase subunit SNO1 (SNO1) (Saccharomyces cerevisiae (strain ATCC 204508 / S288c) (Baker's yeast)).